The sequence spans 154 residues: SsrA-binding protein (154 aa).

It belongs to the SmpB family.

It localises to the cytoplasm. Its function is as follows. Required for rescue of stalled ribosomes mediated by trans-translation. Binds to transfer-messenger RNA (tmRNA), required for stable association of tmRNA with ribosomes. tmRNA and SmpB together mimic tRNA shape, replacing the anticodon stem-loop with SmpB. tmRNA is encoded by the ssrA gene; the 2 termini fold to resemble tRNA(Ala) and it encodes a 'tag peptide', a short internal open reading frame. During trans-translation Ala-aminoacylated tmRNA acts like a tRNA, entering the A-site of stalled ribosomes, displacing the stalled mRNA. The ribosome then switches to translate the ORF on the tmRNA; the nascent peptide is terminated with the 'tag peptide' encoded by the tmRNA and targeted for degradation. The ribosome is freed to recommence translation, which seems to be the essential function of trans-translation. The sequence is that of SsrA-binding protein from Gluconacetobacter diazotrophicus (strain ATCC 49037 / DSM 5601 / CCUG 37298 / CIP 103539 / LMG 7603 / PAl5).